We begin with the raw amino-acid sequence, 276 residues long: Formamidopyrimidine-DNA glycosylase (276 aa).

Pro2 functions as the Schiff-base intermediate with DNA in the catalytic mechanism. The active-site Proton donor is the Glu3. Lys58 (proton donor; for beta-elimination activity) is an active-site residue. Positions 94, 112, and 157 each coordinate DNA. Residues 242–276 form an FPG-type zinc finger; the sequence is FVYDRAGEPCRVCGAPIRQIVQGQRSTYFCPNCQR. Arg266 functions as the Proton donor; for delta-elimination activity in the catalytic mechanism.

This sequence belongs to the FPG family. Monomer. It depends on Zn(2+) as a cofactor.

It catalyses the reaction Hydrolysis of DNA containing ring-opened 7-methylguanine residues, releasing 2,6-diamino-4-hydroxy-5-(N-methyl)formamidopyrimidine.. The enzyme catalyses 2'-deoxyribonucleotide-(2'-deoxyribose 5'-phosphate)-2'-deoxyribonucleotide-DNA = a 3'-end 2'-deoxyribonucleotide-(2,3-dehydro-2,3-deoxyribose 5'-phosphate)-DNA + a 5'-end 5'-phospho-2'-deoxyribonucleoside-DNA + H(+). Its function is as follows. Involved in base excision repair of DNA damaged by oxidation or by mutagenic agents. Acts as a DNA glycosylase that recognizes and removes damaged bases. Has a preference for oxidized purines, such as 7,8-dihydro-8-oxoguanine (8-oxoG). Has AP (apurinic/apyrimidinic) lyase activity and introduces nicks in the DNA strand. Cleaves the DNA backbone by beta-delta elimination to generate a single-strand break at the site of the removed base with both 3'- and 5'-phosphates. The protein is Formamidopyrimidine-DNA glycosylase of Burkholderia pseudomallei (strain 1710b).